A 404-amino-acid polypeptide reads, in one-letter code: uncharacterized protein (404 aa).

This is an uncharacterized protein from Ostreid herpesvirus 1 (isolate France) (OsHV-1).